The chain runs to 492 residues: 3-octaprenyl-4-hydroxybenzoate carboxy-lyase (492 aa).

Asn175 contacts Mn(2+). Prenylated FMN-binding positions include 178–180 (IYR), 192–194 (RWL), and 197–198 (RG). Glu241 contacts Mn(2+). The active-site Proton donor is the Asp290.

It belongs to the UbiD family. As to quaternary structure, homohexamer. The cofactor is prenylated FMN. Mn(2+) is required as a cofactor.

It is found in the cell membrane. The catalysed reaction is a 4-hydroxy-3-(all-trans-polyprenyl)benzoate + H(+) = a 2-(all-trans-polyprenyl)phenol + CO2. The protein operates within cofactor biosynthesis; ubiquinone biosynthesis. In terms of biological role, catalyzes the decarboxylation of 3-octaprenyl-4-hydroxy benzoate to 2-octaprenylphenol, an intermediate step in ubiquinone biosynthesis. This Salmonella choleraesuis (strain SC-B67) protein is 3-octaprenyl-4-hydroxybenzoate carboxy-lyase.